A 114-amino-acid chain; its full sequence is N(4)-acetylcytidine amidohydrolase (114 aa).

The region spanning 8–93 (TFFEFLTPLV…ALIQEIYPNI (86 aa)) is the ASCH domain. Residue Lys-22 is the Proton acceptor of the active site. Residue Thr-25 is the Nucleophile of the active site. Glu-75 serves as the catalytic Proton donor.

Belongs to the N(4)-acetylcytidine amidohydrolase family.

It carries out the reaction N(4)-acetylcytidine + H2O = cytidine + acetate + H(+). The catalysed reaction is N(4)-acetyl-2'-deoxycytidine + H2O = 2'-deoxycytidine + acetate + H(+). The enzyme catalyses N(4)-acetylcytosine + H2O = cytosine + acetate + H(+). Catalyzes the hydrolysis of N(4)-acetylcytidine (ac4C). The polypeptide is N(4)-acetylcytidine amidohydrolase (Vibrio cholerae serotype O1 (strain ATCC 39541 / Classical Ogawa 395 / O395)).